The primary structure comprises 56 residues: Ovomucoid (56 aa).

The Kazal-like domain occupies 6-56 (VDCSEYPKPDCTLEYRPLCGSDNKTYASKCNFCNAVVESNGTLTLSHFGKC). Disulfide bonds link Cys8–Cys38, Cys16–Cys35, and Cys24–Cys56. N-linked (GlcNAc...) asparagine glycosylation is present at Asn45.

The protein localises to the secreted. In Callipepla squamata pallida (Blue scaled quail), this protein is Ovomucoid.